The chain runs to 259 residues: 5'-nucleotidase SurE (259 aa).

The a divalent metal cation site is built by D8, D9, S40, and N92.

Belongs to the SurE nucleotidase family. A divalent metal cation serves as cofactor.

Its subcellular location is the cytoplasm. The enzyme catalyses a ribonucleoside 5'-phosphate + H2O = a ribonucleoside + phosphate. In terms of biological role, nucleotidase that shows phosphatase activity on nucleoside 5'-monophosphates. The polypeptide is 5'-nucleotidase SurE (Stenotrophomonas maltophilia (strain K279a)).